A 246-amino-acid polypeptide reads, in one-letter code: Ly6/PLAUR domain-containing protein 4 (246 aa).

Positions 1–26 (MGPQHLSPMQLLCLLGAISSLPWAEA) are cleaved as a signal peptide. N-linked (GlcNAc...) asparagine glycosylation is present at N117. The UPAR/Ly6 domain maps to 142 to 223 (CPTCVGEHSK…INIVEKALFT (82 aa)). A225 carries the GPI-anchor amidated alanine lipid modification. The propeptide at 226–246 (GTPCRSPSWGILLGLLFAFKG) is removed in mature form.

Its subcellular location is the cell membrane. The sequence is that of Ly6/PLAUR domain-containing protein 4 (LYPD4) from Bos taurus (Bovine).